The sequence spans 534 residues: Probable RNA-binding protein 46 (534 aa).

RRM domains are found at residues 61–139, 141–223, and 236–308; these read CEVF…VSLD, CRLF…WASP, and KVLY…LAKP.

The protein resides in the cytoplasm. In terms of biological role, essential for male and female fertility, playing a crucial role in regulating germ cell development by ensuring the proper progression of meiosis prophase I. The protein is Probable RNA-binding protein 46 (rbm46) of Xenopus tropicalis (Western clawed frog).